A 228-amino-acid polypeptide reads, in one-letter code: Octanoyltransferase (228 aa).

In terms of domain architecture, BPL/LPL catalytic spans 32-214 (DVVPDTVLLV…HLRRLFERDW (183 aa)). Residues 77–84 (RGGDVTYH), 144–146 (SVG), and 157–159 (GIA) each bind substrate. Cys175 acts as the Acyl-thioester intermediate in catalysis.

Belongs to the LipB family.

It localises to the cytoplasm. It carries out the reaction octanoyl-[ACP] + L-lysyl-[protein] = N(6)-octanoyl-L-lysyl-[protein] + holo-[ACP] + H(+). Its pathway is protein modification; protein lipoylation via endogenous pathway; protein N(6)-(lipoyl)lysine from octanoyl-[acyl-carrier-protein]: step 1/2. Functionally, catalyzes the transfer of endogenously produced octanoic acid from octanoyl-acyl-carrier-protein onto the lipoyl domains of lipoate-dependent enzymes. Lipoyl-ACP can also act as a substrate although octanoyl-ACP is likely to be the physiological substrate. The protein is Octanoyltransferase of Syntrophobacter fumaroxidans (strain DSM 10017 / MPOB).